A 78-amino-acid polypeptide reads, in one-letter code: Translation initiation factor IF-1, chloroplastic (78 aa).

The region spanning 1–72 is the S1-like domain; that stretch reads MKKQNLIDME…TKGRITYRLR (72 aa).

The protein belongs to the IF-1 family. As to quaternary structure, component of the 30S ribosomal translation pre-initiation complex which assembles on the 30S ribosome in the order IF-2 and IF-3, IF-1 and N-formylmethionyl-tRNA(fMet); mRNA recruitment can occur at any time during PIC assembly.

Its subcellular location is the plastid. It localises to the chloroplast. Functionally, one of the essential components for the initiation of protein synthesis. Stabilizes the binding of IF-2 and IF-3 on the 30S subunit to which N-formylmethionyl-tRNA(fMet) subsequently binds. Helps modulate mRNA selection, yielding the 30S pre-initiation complex (PIC). Upon addition of the 50S ribosomal subunit IF-1, IF-2 and IF-3 are released leaving the mature 70S translation initiation complex. In Physcomitrium patens (Spreading-leaved earth moss), this protein is Translation initiation factor IF-1, chloroplastic.